Here is a 661-residue protein sequence, read N- to C-terminus: Transmembrane and coiled-coil domain-containing protein STS1 (661 aa).

Disordered regions lie at residues 34–71 (AHHHHDDDDEEQGRTSTSSGGGGGSSSSSSNSGAGADA) and 154–185 (VGNTIKGGDQDALPSSSGTDKSPGESSHDDQL). A compositionally biased stretch (low complexity) spans 59–69 (SSSSSNSGAGA). Basic and acidic residues predominate over residues 175-184 (SPGESSHDDQ). The next 4 helical transmembrane spans lie at 306–326 (ALLAITGGLAAPAIAAGFGAL), 333–353 (LVPVIGASGFAAMATAAGSVA), 355–375 (SVAVAASFGAAGAGLTGSKMA), and 466–486 (LSGLLAAFAWPATLLAATDFI).

This sequence belongs to the TMCO4 family. Interacts with PKS10/PKS2 and 4CLL9/ACOS12.

The protein localises to the endoplasmic reticulum membrane. Functionally, involved in anther lipids biosynthesis and is required for tapetum degradation and pollen wall formation. Required for the formation of Ubisch bodies and microspores. Possesses lipase activity in vitro toward two synthetic substrates, p-nitrophenyl acetate (pNPA) and p-nitrophenyl butyrate (pNPB). This Oryza sativa subsp. japonica (Rice) protein is Transmembrane and coiled-coil domain-containing protein STS1.